The sequence spans 99 residues: Beta-defensin 127 (99 aa).

A signal peptide spans 1 to 20 (MGLFMIIAILLFQKPTVTEQ). Disulfide bonds link Cys24/Cys53, Cys33/Cys47, and Cys37/Cys54. The propeptide occupies 66-99 (ITKPSHPKPATLALTLQDYVTIIENFPSLKTQST).

Belongs to the beta-defensin family.

It is found in the secreted. Functionally, has antibacterial activity. The chain is Beta-defensin 127 (DEFB127) from Pan troglodytes (Chimpanzee).